Reading from the N-terminus, the 170-residue chain is Universal stress protein MJ0531 (170 aa).

This sequence belongs to the universal stress protein A family.

The chain is Universal stress protein MJ0531 from Methanocaldococcus jannaschii (strain ATCC 43067 / DSM 2661 / JAL-1 / JCM 10045 / NBRC 100440) (Methanococcus jannaschii).